Here is a 297-residue protein sequence, read N- to C-terminus: Urease accessory protein UreD (297 aa).

The protein belongs to the UreD family. In terms of assembly, ureD, UreF and UreG form a complex that acts as a GTP-hydrolysis-dependent molecular chaperone, activating the urease apoprotein by helping to assemble the nickel containing metallocenter of UreC. The UreE protein probably delivers the nickel.

It is found in the cytoplasm. Required for maturation of urease via the functional incorporation of the urease nickel metallocenter. The protein is Urease accessory protein UreD of Prochlorococcus marinus subsp. pastoris (strain CCMP1986 / NIES-2087 / MED4).